We begin with the raw amino-acid sequence, 773 residues long: Subtilisin-like protease SBT3.4 (773 aa).

The first 23 residues, 1-23 (MRNFRSSVLVVLSLIIVLNVARA), serve as a signal peptide directing secretion. A propeptide spans 24-108 (SAKSKVHIVY…VIPDSYYELA (85 aa)) (activation peptide). The Inhibitor I9 domain maps to 29-108 (VHIVYLGEKQ…VIPDSYYELA (80 aa)). The 509-residue stretch at 112-620 (IWDYLGPSAD…GGLVNPEKAA (509 aa)) folds into the Peptidase S8 domain. Asp-142 acts as the Charge relay system in catalysis. A glycan (N-linked (GlcNAc...) asparagine) is linked at Asn-200. His-216 acts as the Charge relay system in catalysis. N-linked (GlcNAc...) asparagine glycosylation is found at Asn-231, Asn-408, and Asn-536. The PA domain maps to 382-474 (SLVYPEDPGN…IDNELGTDIL (93 aa)). Residue Ser-551 is the Charge relay system of the active site. Asn-643 carries N-linked (GlcNAc...) asparagine glycosylation.

It belongs to the peptidase S8 family.

The protein localises to the secreted. This chain is Subtilisin-like protease SBT3.4, found in Arabidopsis thaliana (Mouse-ear cress).